A 581-amino-acid polypeptide reads, in one-letter code: MGFDYALVHLKYTIPPAVLLTLLYRPLLTKIDVYKVAFLVTIAVVATIPWDSYLIRNRIWSYPDHVIIGPTLFDIPLEEVFFFVVQTYNTSLLYLVLSKPTFQPVYLCTERDELHGSWRLKRLIGQAILLGAIAWGWFCVRERGLGTYTGLILIWAGPFLLLLWSLAYQFIIGLPFTNTLLPIVLPTLYLWIVDTLALRRGTWVISPGTKFGVHLWDGLEIEEALFFLLTNVLIVFGQLAFDNALAVLYAFPHLFPDPSLLPSPATLIRSLLTSCAQYDEARLTGFREAVSRLKRKSRSFYLASSTFQGPLRMDLLLLYSFCRVADDLVDNAATTEEARQWIAKLHKFLDNVYRKDVVCSSVTDQVRKEFPLDTHSALLQLPCCKLSAEPLRDLLRGFEMDLEFNSTSPIQSTEDLVLYSERVAGTVAQMCIQLIFHLYPSSLTAEKRHKVVAAGNSMGVALQYVNIARDIGVDAKIGRVYLPTDWLSEVGLNCDTVLKDPKDPRIEALRGRLLDDAFSFYEEAKLAIAQLPIEAQGPIRVAVESYMEIGRTLKQDGFIVKAGRATVPKWRRVLVAWRTLN.

The lycopene beta-cyclase stretch occupies residues 1 to 243; the sequence is MGFDYALVHL…IVFGQLAFDN (243 aa). Helical transmembrane passes span 3–23, 35–55, 65–85, 120–140, 152–172, 173–193, and 221–241; these read FDYALVHLKYTIPPAVLLTLL, KVAFLVTIAVVATIPWDSYLI, HVIIGPTLFDIPLEEVFFFVV, LKRLIGQAILLGAIAWGWFCV, ILIWAGPFLLLLWSLAYQFII, GLPFTNTLLPIVLPTLYLWIV, and IEEALFFLLTNVLIVFGQLAF. The phytoene synthase stretch occupies residues 250 to 581; sequence AFPHLFPDPS…RVLVAWRTLN (332 aa).

It in the N-terminal section; belongs to the lycopene beta-cyclase family. In the C-terminal section; belongs to the phytoene/squalene synthase family.

Its subcellular location is the membrane. It catalyses the reaction all-trans-lycopene = gamma-carotene. It carries out the reaction gamma-carotene = all-trans-beta-carotene. The catalysed reaction is 2 (2E,6E,10E)-geranylgeranyl diphosphate = 15-cis-phytoene + 2 diphosphate. The protein operates within carotenoid biosynthesis; beta-carotene biosynthesis. Its pathway is carotenoid biosynthesis; phytoene biosynthesis; all-trans-phytoene from geranylgeranyl diphosphate: step 1/1. In terms of biological role, bifunctional enzyme that catalyzes the reactions from geranylgeranyl diphosphate to phytoene (phytoene synthase) and lycopene to beta-carotene via the intermediate gamma-carotene (lycopene cyclase). In Leptosphaeria maculans (strain JN3 / isolate v23.1.3 / race Av1-4-5-6-7-8) (Blackleg fungus), this protein is Bifunctional lycopene cyclase/phytoene synthase.